The following is a 1085-amino-acid chain: Voltage-dependent calcium channel subunit alpha-2/delta-3 (1085 aa).

The N-terminal stretch at 1 to 33 (MAGPGSLCCASRGASALLATALLYAALGDVVRS) is a signal peptide. Residues 34-1062 (EQQIPLSVVK…HPEENARECG (1029 aa)) are Extracellular-facing. Asn-166 is a glycosylation site (N-linked (GlcNAc...) asparagine). In terms of domain architecture, VWFA spans 256–438 (DVVILVDVSG…ENVMEYLHVL (183 aa)). A divalent metal cation-binding residues include Asp-262, Ser-264, and Ser-266. The MIDAS-like motif motif lies at 262-266 (DVSGS). N-linked (GlcNAc...) asparagine glycosylation occurs at Asn-309. Cys-412 and Cys-1049 are oxidised to a cystine. The 92-residue stretch at 452-543 (WTEAYIDSTL…RPLYEEGKKR (92 aa)) folds into the Cache domain. Residues Asn-547 and Asn-626 are each glycosylated (N-linked (GlcNAc...) asparagine). Position 918 is a phosphotyrosine (Tyr-918). The helical transmembrane segment at 1063-1083 (GASSLQAQVALLLLPLVSSLF) threads the bilayer. At 1084–1085 (SR) the chain is on the cytoplasmic side.

This sequence belongs to the calcium channel subunit alpha-2/delta family. As to quaternary structure, dimer formed of alpha-2-2 and delta-2 chains; disulfide-linked. Voltage-dependent calcium channels are multisubunit complexes, consisting of alpha-1 (CACNA1), alpha-2 (CACNA2D), beta (CACNB) and delta (CACNA2D) subunits in a 1:1:1:1 ratio. Post-translationally, N-glycosylated. May be proteolytically processed into subunits alpha-2-3 and delta-3 that are disulfide-linked. It is however unclear whether such cleavage really takes place in vivo and has a functional role. In heart, it is expressed in atrium but not in ventricle.

The protein localises to the membrane. In terms of biological role, the alpha-2/delta subunit of voltage-dependent calcium channels regulates calcium current density and activation/inactivation kinetics of the calcium channel. Acts as a regulatory subunit for P/Q-type calcium channel (CACNA1A), N-type (CACNA1B), L-type (CACNA1C OR CACNA1D) but not T-type (CACNA1G). This Rattus norvegicus (Rat) protein is Voltage-dependent calcium channel subunit alpha-2/delta-3 (Cacna2d3).